A 341-amino-acid polypeptide reads, in one-letter code: L-threonine 3-dehydrogenase (341 aa).

C38 lines the Zn(2+) pocket. Active-site charge relay system residues include T40 and H43. H63, E64, C93, C96, C99, and C107 together coordinate Zn(2+). NAD(+) is bound by residues I175, D195, R200, 262–264 (LGI), and 286–287 (IY).

This sequence belongs to the zinc-containing alcohol dehydrogenase family. Homotetramer. Requires Zn(2+) as cofactor.

The protein resides in the cytoplasm. The catalysed reaction is L-threonine + NAD(+) = (2S)-2-amino-3-oxobutanoate + NADH + H(+). Its pathway is amino-acid degradation; L-threonine degradation via oxydo-reductase pathway; glycine from L-threonine: step 1/2. In terms of biological role, catalyzes the NAD(+)-dependent oxidation of L-threonine to 2-amino-3-ketobutyrate. This chain is L-threonine 3-dehydrogenase, found in Shewanella sp. (strain W3-18-1).